Consider the following 155-residue polypeptide: RxLR effector protein 24 (155 aa).

The first 21 residues, 1-21 (MRLLIWVLFVTLVTFVSNTTA), serve as a signal peptide directing secretion. The short motif at 52-78 (RFLRTESKNDLKSDADTNGIDIEDEER) is the RxLR-dEER element. An RABA-binding domain region spans residues 105 to 155 (EKAFQRMNQKGETPTTLAKRLDIGKTAEKRFEKTYEKYTAWWINHHTNAGT).

This sequence belongs to the RxLR effector family. Interacts with Arabidopsis thaliana RABA GTPases including RABA1a, RABA1b, RABA1c, RABA1d, RABA1f, RABA2a, RABA2c, RABA2d, RABA4a, RABA4b and RABA4c.

The protein localises to the secreted. It is found in the host cell membrane. The protein resides in the host endomembrane system. Its function is as follows. Effector protein that contributes to pathogen virulence. Targets members of the RABA GTPases subfamily to inhibit vesicular secretion, leading to an accumulation of secretory proteins in the endoplasmic reticulum. The polypeptide is RxLR effector protein 24 (Phytophthora brassicae).